The sequence spans 321 residues: tRNA(Ile)-lysidine synthase (321 aa).

S21–S26 contributes to the ATP binding site.

It belongs to the tRNA(Ile)-lysidine synthase family.

It is found in the cytoplasm. The catalysed reaction is cytidine(34) in tRNA(Ile2) + L-lysine + ATP = lysidine(34) in tRNA(Ile2) + AMP + diphosphate + H(+). In terms of biological role, ligates lysine onto the cytidine present at position 34 of the AUA codon-specific tRNA(Ile) that contains the anticodon CAU, in an ATP-dependent manner. Cytidine is converted to lysidine, thus changing the amino acid specificity of the tRNA from methionine to isoleucine. This is tRNA(Ile)-lysidine synthase from Campylobacter jejuni subsp. jejuni serotype O:2 (strain ATCC 700819 / NCTC 11168).